Reading from the N-terminus, the 162-residue chain is UPF0262 protein Pden_1958 (162 aa).

A disordered region spans residues 1 to 22 (MSQSANRLCRIDIDDSALPPPS).

It belongs to the UPF0262 family.

The chain is UPF0262 protein Pden_1958 from Paracoccus denitrificans (strain Pd 1222).